The primary structure comprises 357 residues: GTPase Obg (357 aa).

Positions methionine 1–leucine 159 constitute an Obg domain. The OBG-type G domain occupies alanine 160 to glutamate 343. GTP is bound by residues glycine 166 to serine 173, phenylalanine 191 to tyrosine 195, aspartate 213 to glycine 216, asparagine 293 to aspartate 296, and serine 324 to valine 326. Mg(2+)-binding residues include serine 173 and threonine 193.

This sequence belongs to the TRAFAC class OBG-HflX-like GTPase superfamily. OBG GTPase family. Monomer. The cofactor is Mg(2+).

It localises to the cytoplasm. An essential GTPase which binds GTP, GDP and possibly (p)ppGpp with moderate affinity, with high nucleotide exchange rates and a fairly low GTP hydrolysis rate. Plays a role in control of the cell cycle, stress response, ribosome biogenesis and in those bacteria that undergo differentiation, in morphogenesis control. This Xylella fastidiosa (strain M12) protein is GTPase Obg.